The chain runs to 208 residues: Probable splicing factor, arginine/serine-rich 5 (208 aa).

The RRM domain maps to 2–74; the sequence is PRLYLGKIPY…MRLVVEMARG (73 aa). Residues 71-208 form a disordered region; sequence MARGKPRGND…RSPSPGSPKD (138 aa). Residues 84–123 are compositionally biased toward basic residues; that stretch reads SRSPRRRSRSPRRRSRTPPRRRSRSRDRKRSRRSRSRSSS. Over residues 128 to 153 the composition is skewed to basic and acidic residues; that stretch reads PVRESRRRSESRSPSPKRDLKREASR.

The protein belongs to the splicing factor SR family. Post-translationally, extensively phosphorylated on serine residues in the RS domain.

The protein localises to the nucleus. In terms of biological role, plays a functionally redundant role in shifting germ cell sexual differentiation in hermaphrodites. This chain is Probable splicing factor, arginine/serine-rich 5 (rsp-5), found in Caenorhabditis elegans.